A 520-amino-acid polypeptide reads, in one-letter code: Cytochrome P450 716A67 (520 aa).

Residues 4–24 traverse the membrane as a helical segment; that stretch reads SLAIYYGIILITVTLGLVYTW. Residue Cys-466 participates in heme binding.

Belongs to the cytochrome P450 family. Heme is required as a cofactor.

Its subcellular location is the membrane. In terms of biological role, catalyzes hydroxylation at the C-2 position of different intermediates of the hemolytic sapogenin biosynthetic pathway downstream of oleanolic acid synthesis. The protein is Cytochrome P450 716A67 of Medicago truncatula (Barrel medic).